Consider the following 311-residue polypeptide: Putative dihydroorotate dehydrogenase A (fumarate) (311 aa).

Residues Lys45, 69 to 73 (NSMGL), and Asn128 contribute to the substrate site. 45–46 (KT) lines the FMN pocket. Asn128 serves as a coordination point for FMN. Cys131 acts as the Nucleophile in catalysis. FMN-binding residues include Lys165 and Val193. 194-195 (NS) contacts substrate. FMN is bound by residues Gly220, 248-249 (GG), and 270-271 (GT).

It belongs to the dihydroorotate dehydrogenase family. Type 1 subfamily. In terms of assembly, homodimer. FMN serves as cofactor.

Its subcellular location is the cytoplasm. It carries out the reaction (S)-dihydroorotate + fumarate = orotate + succinate. It functions in the pathway pyrimidine metabolism; UMP biosynthesis via de novo pathway. In terms of biological role, catalyzes the conversion of dihydroorotate to orotate with fumarate as the electron acceptor. This chain is Putative dihydroorotate dehydrogenase A (fumarate) (pyrD), found in Streptococcus pyogenes serotype M1.